A 581-amino-acid polypeptide reads, in one-letter code: Phosphatidylinositol N-acetylglucosaminyltransferase subunit Q (581 aa).

Transmembrane regions (helical) follow at residues 276–298 (ANML…WLHS), 344–366 (LGRF…SPFI), 381–403 (LTVA…YCFY), 446–468 (LFIG…LYYL), and 478–500 (ITVQ…YSLG).

This sequence belongs to the PIGQ family. Component of the glycosylphosphatidylinositol-N-acetylglucosaminyltransferase (GPI-GnT) complex composed at least by PIGA, PIGC, PIGH, PIGP, PIGQ, PIGY and DPM2. Interacts with PIGA, PIGH and PIGC.

It is found in the membrane. It participates in glycolipid biosynthesis; glycosylphosphatidylinositol-anchor biosynthesis. Functionally, part of the glycosylphosphatidylinositol-N-acetylglucosaminyltransferase (GPI-GnT) complex that catalyzes the transfer of N-acetylglucosamine from UDP-N-acetylglucosamine to phosphatidylinositol and participates in the first step of GPI biosynthesis. The polypeptide is Phosphatidylinositol N-acetylglucosaminyltransferase subunit Q (Mus musculus (Mouse)).